The sequence spans 800 residues: Chondroitin sulfate synthase 1 (800 aa).

Residues Met1–Arg7 lie on the Cytoplasmic side of the membrane. Residues Ala8 to Leu28 form a helical; Signal-anchor for type II membrane protein membrane-spanning segment. At Pro29–Ala800 the chain is on the lumenal side. The interval Arg36 to Gly66 is disordered. Residues Asn188 and Asn622 are each glycosylated (N-linked (GlcNAc...) asparagine). A divalent metal cation is bound by residues Asp632 and His746.

It belongs to the chondroitin N-acetylgalactosaminyltransferase family. Requires Co(2+) as cofactor. It depends on Mn(2+) as a cofactor. The cofactor is Cd(2+).

It localises to the golgi apparatus. It is found in the golgi stack membrane. Its subcellular location is the secreted. The catalysed reaction is 3-O-(beta-D-GlcA-(1-&gt;3)-beta-D-GalNAc-(1-&gt;4)-beta-D-GlcA-(1-&gt;3)-beta-D-Gal-(1-&gt;3)-beta-D-Gal-(1-&gt;4)-beta-D-Xyl)-L-seryl-[protein] + UDP-N-acetyl-alpha-D-galactosamine = 3-O-(beta-D-GalNAc-(1-&gt;4)-beta-D-GlcA-(1-&gt;3)-beta-D-GalNAc-(1-&gt;4)-beta-D-GlcA-(1-&gt;3)-beta-D-Gal-(1-&gt;3)-beta-D-Gal-(1-&gt;4)-beta-D-Xyl)-L-seryl-[protein] + UDP + H(+). The enzyme catalyses 3-O-{beta-D-GlcA-(1-&gt;3)-[beta-D-GalNAc-(1-&gt;4)-beta-D-GlcA-(1-&gt;3)](n)-beta-D-GalNAc-(1-&gt;4)-beta-D-GlcA-(1-&gt;3)-beta-D-Gal-(1-&gt;3)-beta-D-Gal-(1-&gt;4)-beta-D-Xyl}-L-seryl-[protein] + UDP-N-acetyl-alpha-D-galactosamine = 3-O-{[beta-D-GalNAc-(1-&gt;4)-beta-D-GlcA-(1-&gt;3)](n+1)-beta-D-GalNAc-(1-&gt;4)-beta-D-GlcA-(1-&gt;3)-beta-D-Gal-(1-&gt;3)-beta-D-Gal-(1-&gt;4)-beta-D-Xyl}-L-seryl-[protein] + UDP + H(+). It carries out the reaction 3-O-(beta-D-GalNAc-(1-&gt;4)-beta-D-GlcA-(1-&gt;3)-beta-D-Gal-(1-&gt;3)-beta-D-Gal-(1-&gt;4)-beta-D-Xyl)-L-seryl-[protein] + UDP-alpha-D-glucuronate = 3-O-(beta-D-GlcA-(1-&gt;3)-beta-D-GalNAc-(1-&gt;4)-beta-D-GlcA-(1-&gt;3)-beta-D-Gal-(1-&gt;3)-beta-D-Gal-(1-&gt;4)-beta-D-Xyl)-L-seryl-[protein] + UDP + H(+). It catalyses the reaction 3-O-{[beta-D-GalNAc-(1-&gt;4)-beta-D-GlcA-(1-&gt;3)](n)-beta-D-GalNAc-(1-&gt;4)-beta-D-GlcA-(1-&gt;3)-beta-D-Gal-(1-&gt;3)-beta-D-Gal-(1-&gt;4)-beta-D-Xyl}-L-seryl-[protein] + UDP-alpha-D-glucuronate = 3-O-{beta-D-GlcA-(1-&gt;3)-[beta-D-GalNAc-(1-&gt;4)-beta-D-GlcA-(1-&gt;3)](n)-beta-D-GalNAc-(1-&gt;4)-beta-D-GlcA-(1-&gt;3)-beta-D-Gal-(1-&gt;3)-beta-D-Gal-(1-&gt;4)-beta-D-Xyl}-L-seryl-[protein] + UDP + H(+). Has both beta-1,3-glucuronic acid and beta-1,4-N-acetylgalactosamine transferase activity. Transfers glucuronic acid (GlcUA) from UDP-GlcUA and N-acetylgalactosamine (GalNAc) from UDP-GalNAc to the non-reducing end of the elongating chondroitin polymer. Involved in the negative control of osteogenesis likely through the modulation of NOTCH signaling. The chain is Chondroitin sulfate synthase 1 (Chsy1) from Mus musculus (Mouse).